The primary structure comprises 82 residues: MLRQILGQAKKHPSLIPLFVFIGAGGTGAALYVMRLALFNPDVSWDRKNNPEPWNKLGPNEQYKFYSVNVDYSKLKKEGPDF.

Over 1 to 14 (MLRQILGQAKKHPS) the chain is Mitochondrial matrix. K10 is subject to N6-acetyllysine. Residues 15-37 (LIPLFVFIGAGGTGAALYVMRLA) form a helical membrane-spanning segment. Residues 38–82 (LFNPDVSWDRKNNPEPWNKLGPNEQYKFYSVNVDYSKLKKEGPDF) lie on the Mitochondrial intermembrane side of the membrane. S67 is modified (phosphoserine).

This sequence belongs to the complex IV NDUFA4 subunit family. Component of the cytochrome c oxidase (complex IV, CIV), a multisubunit enzyme composed of 14 subunits. The complex is composed of a catalytic core of 3 subunits MT-CO1, MT-CO2 and MT-CO3, encoded in the mitochondrial DNA, and 11 supernumerary subunits COX4I, COX5A, COX5B, COX6A, COX6B, COX6C, COX7A, COX7B, COX7C, COX8 and NDUFA4, which are encoded in the nuclear genome. The complex exists as a monomer or a dimer and forms supercomplexes (SCs) in the inner mitochondrial membrane with NADH-ubiquinone oxidoreductase (complex I, CI) and ubiquinol-cytochrome c oxidoreductase (cytochrome b-c1 complex, complex III, CIII), resulting in different assemblies (supercomplex SCI(1)III(2)IV(1) and megacomplex MCI(2)III(2)IV(2)). Interacts with RAB5IF. Interacts with FLVCR2; this interaction occurs in the absence of heme and is disrupted upon heme binding.

The protein localises to the mitochondrion inner membrane. In terms of biological role, component of the cytochrome c oxidase, the last enzyme in the mitochondrial electron transport chain which drives oxidative phosphorylation. The respiratory chain contains 3 multisubunit complexes succinate dehydrogenase (complex II, CII), ubiquinol-cytochrome c oxidoreductase (cytochrome b-c1 complex, complex III, CIII) and cytochrome c oxidase (complex IV, CIV), that cooperate to transfer electrons derived from NADH and succinate to molecular oxygen, creating an electrochemical gradient over the inner membrane that drives transmembrane transport and the ATP synthase. Cytochrome c oxidase is the component of the respiratory chain that catalyzes the reduction of oxygen to water. Electrons originating from reduced cytochrome c in the intermembrane space (IMS) are transferred via the dinuclear copper A center (CU(A)) of subunit 2 and heme A of subunit 1 to the active site in subunit 1, a binuclear center (BNC) formed by heme A3 and copper B (CU(B)). The BNC reduces molecular oxygen to 2 water molecules unsing 4 electrons from cytochrome c in the IMS and 4 protons from the mitochondrial matrix. NDUFA4 is required for complex IV maintenance. The chain is Cytochrome c oxidase subunit NDUFA4 (Ndufa4) from Mus musculus (Mouse).